Reading from the N-terminus, the 401-residue chain is S-adenosylmethionine synthase (401 aa).

Residue 136 to 141 (GQGSVD) participates in ATP binding.

It belongs to the AdoMet synthase 2 family. It depends on Mg(2+) as a cofactor.

The catalysed reaction is L-methionine + ATP + H2O = S-adenosyl-L-methionine + phosphate + diphosphate. The protein operates within amino-acid biosynthesis; S-adenosyl-L-methionine biosynthesis; S-adenosyl-L-methionine from L-methionine: step 1/1. Functionally, catalyzes the formation of S-adenosylmethionine from methionine and ATP. The protein is S-adenosylmethionine synthase (mat) of Pyrococcus abyssi (strain GE5 / Orsay).